Reading from the N-terminus, the 252-residue chain is 4-hydroxy-tetrahydrodipicolinate reductase (252 aa).

Residue Gly-8–Met-13 participates in NAD(+) binding. Arg-36 contributes to the NADP(+) binding site. NAD(+) is bound by residues Gly-89–Thr-91 and Ser-114–Phe-117. His-146 serves as the catalytic Proton donor/acceptor. His-147 is a binding site for (S)-2,3,4,5-tetrahydrodipicolinate. The active-site Proton donor is the Lys-150. A (S)-2,3,4,5-tetrahydrodipicolinate-binding site is contributed by Gly-156–Thr-157.

This sequence belongs to the DapB family.

It localises to the cytoplasm. It catalyses the reaction (S)-2,3,4,5-tetrahydrodipicolinate + NAD(+) + H2O = (2S,4S)-4-hydroxy-2,3,4,5-tetrahydrodipicolinate + NADH + H(+). It carries out the reaction (S)-2,3,4,5-tetrahydrodipicolinate + NADP(+) + H2O = (2S,4S)-4-hydroxy-2,3,4,5-tetrahydrodipicolinate + NADPH + H(+). It functions in the pathway amino-acid biosynthesis; L-lysine biosynthesis via DAP pathway; (S)-tetrahydrodipicolinate from L-aspartate: step 4/4. In terms of biological role, catalyzes the conversion of 4-hydroxy-tetrahydrodipicolinate (HTPA) to tetrahydrodipicolinate. This is 4-hydroxy-tetrahydrodipicolinate reductase from Methanoculleus marisnigri (strain ATCC 35101 / DSM 1498 / JR1).